The following is a 218-amino-acid chain: 7-cyano-7-deazaguanine synthase 1 (218 aa).

9–19 is a binding site for ATP; that stretch reads YSGGMDSFTVL. The Zn(2+) site is built by Cys185, Cys193, Cys196, and Cys199.

This sequence belongs to the QueC family. Zn(2+) serves as cofactor.

It catalyses the reaction 7-carboxy-7-deazaguanine + NH4(+) + ATP = 7-cyano-7-deazaguanine + ADP + phosphate + H2O + H(+). The protein operates within purine metabolism; 7-cyano-7-deazaguanine biosynthesis. In terms of biological role, catalyzes the ATP-dependent conversion of 7-carboxy-7-deazaguanine (CDG) to 7-cyano-7-deazaguanine (preQ(0)). This Colwellia psychrerythraea (strain 34H / ATCC BAA-681) (Vibrio psychroerythus) protein is 7-cyano-7-deazaguanine synthase 1.